Here is an 806-residue protein sequence, read N- to C-terminus: mRNA 3'-end-processing protein RNA14 (806 aa).

A disordered region spans residues 1–187 (MSDDYDPTAV…SGPDNNKRKR (187 aa)). 2 stretches are compositionally biased toward basic and acidic residues: residues 33–43 (AAAKDPAHNEE) and 60–107 (QGDE…KPEN). Acidic residues predominate over residues 108–118 (PSEEVAEDDDY). The span at 132–142 (AGGGSVGGTGI) shows a compositional bias: gly residues. Residues 170 to 181 (SSTSNNNNSGPD) show a composition bias toward low complexity. HAT repeat units lie at residues 221 to 253 (EKLD…LEMD), 255 to 286 (GEFK…YVRR), 299 to 334 (EART…FIKS), 345 to 378 (QKND…FEYS), and 404 to 440 (VLEN…WEKS). The tract at residues 729-770 (KPKSRTDEDSDSERPSKRARRTSHGNDQGDKMEPFNLPQKID) is disordered. A compositionally biased stretch (basic and acidic residues) spans 732–744 (SRTDEDSDSERPS).

It localises to the nucleus. Its subcellular location is the cytoplasm. Component of the cleavage factor IA (CFIA) complex, which is involved in the endonucleolytic cleavage during polyadenylation-dependent pre-mRNA 3'-end formation. The sequence is that of mRNA 3'-end-processing protein RNA14 (RNA14) from Yarrowia lipolytica (strain CLIB 122 / E 150) (Yeast).